A 248-amino-acid chain; its full sequence is Type III pantothenate kinase (248 aa).

6 to 13 (ELGNSQLK) provides a ligand contact to ATP. Substrate is bound by residues tyrosine 94 and 101-104 (GVDR). The Proton acceptor role is filled by aspartate 103. K(+) is bound at residue aspartate 123. Residue threonine 126 coordinates ATP. Threonine 179 is a binding site for substrate.

It belongs to the type III pantothenate kinase family. Homodimer. NH4(+) is required as a cofactor. The cofactor is K(+).

Its subcellular location is the cytoplasm. The catalysed reaction is (R)-pantothenate + ATP = (R)-4'-phosphopantothenate + ADP + H(+). It participates in cofactor biosynthesis; coenzyme A biosynthesis; CoA from (R)-pantothenate: step 1/5. Catalyzes the phosphorylation of pantothenate (Pan), the first step in CoA biosynthesis. The protein is Type III pantothenate kinase of Hydrogenovibrio crunogenus (strain DSM 25203 / XCL-2) (Thiomicrospira crunogena).